A 164-amino-acid polypeptide reads, in one-letter code: ATP synthase subunit b (164 aa).

Residues 8–28 (IGLFFWQTIVFLILLFLMAKF) form a helical membrane-spanning segment.

This sequence belongs to the ATPase B chain family. F-type ATPases have 2 components, F(1) - the catalytic core - and F(0) - the membrane proton channel. F(1) has five subunits: alpha(3), beta(3), gamma(1), delta(1), epsilon(1). F(0) has three main subunits: a(1), b(2) and c(10-14). The alpha and beta chains form an alternating ring which encloses part of the gamma chain. F(1) is attached to F(0) by a central stalk formed by the gamma and epsilon chains, while a peripheral stalk is formed by the delta and b chains.

It is found in the cell membrane. F(1)F(0) ATP synthase produces ATP from ADP in the presence of a proton or sodium gradient. F-type ATPases consist of two structural domains, F(1) containing the extramembraneous catalytic core and F(0) containing the membrane proton channel, linked together by a central stalk and a peripheral stalk. During catalysis, ATP synthesis in the catalytic domain of F(1) is coupled via a rotary mechanism of the central stalk subunits to proton translocation. In terms of biological role, component of the F(0) channel, it forms part of the peripheral stalk, linking F(1) to F(0). The polypeptide is ATP synthase subunit b (Christiangramia forsetii (strain DSM 17595 / CGMCC 1.15422 / KT0803) (Gramella forsetii)).